We begin with the raw amino-acid sequence, 115 residues long: Androgen-binding protein homolog (115 aa).

The N-terminal stretch at M1 to A23 is a signal peptide.

This sequence belongs to the secretoglobin family.

The protein resides in the secreted. The protein is Androgen-binding protein homolog of Mesocricetus auratus (Golden hamster).